The chain runs to 104 residues: V-type ATP synthase subunit F (104 aa).

This sequence belongs to the V-ATPase F subunit family.

Functionally, produces ATP from ADP in the presence of a proton gradient across the membrane. The chain is V-type ATP synthase subunit F (atpF) from Thermus thermophilus (strain ATCC 27634 / DSM 579 / HB8).